The primary structure comprises 335 residues: Glycerol-3-phosphate dehydrogenase [NAD(P)+] (335 aa).

Residues serine 12, tryptophan 13, and lysine 107 each contribute to the NADPH site. Sn-glycerol 3-phosphate-binding residues include lysine 107, glycine 138, and serine 140. Alanine 142 provides a ligand contact to NADPH. Sn-glycerol 3-phosphate-binding residues include lysine 193, aspartate 246, serine 256, arginine 257, and asparagine 258. Catalysis depends on lysine 193, which acts as the Proton acceptor. NADPH is bound at residue arginine 257. NADPH-binding residues include valine 281 and glutamate 283.

This sequence belongs to the NAD-dependent glycerol-3-phosphate dehydrogenase family.

The protein localises to the cytoplasm. The catalysed reaction is sn-glycerol 3-phosphate + NAD(+) = dihydroxyacetone phosphate + NADH + H(+). It catalyses the reaction sn-glycerol 3-phosphate + NADP(+) = dihydroxyacetone phosphate + NADPH + H(+). Its pathway is membrane lipid metabolism; glycerophospholipid metabolism. Its function is as follows. Catalyzes the reduction of the glycolytic intermediate dihydroxyacetone phosphate (DHAP) to sn-glycerol 3-phosphate (G3P), the key precursor for phospholipid synthesis. This chain is Glycerol-3-phosphate dehydrogenase [NAD(P)+], found in Geobacter metallireducens (strain ATCC 53774 / DSM 7210 / GS-15).